Here is a 358-residue protein sequence, read N- to C-terminus: Methionine aminopeptidase 2 (358 aa).

His-109 serves as a coordination point for substrate. Residues Asp-130, Asp-141, and His-210 each coordinate a divalent metal cation. Residue His-218 coordinates substrate. Positions 243 and 339 each coordinate a divalent metal cation.

The protein belongs to the peptidase M24A family. Methionine aminopeptidase eukaryotic type 2 subfamily. The cofactor is Co(2+). Requires Zn(2+) as cofactor. It depends on Mn(2+) as a cofactor. Fe(2+) is required as a cofactor.

It localises to the cytoplasm. The enzyme catalyses Release of N-terminal amino acids, preferentially methionine, from peptides and arylamides.. Its function is as follows. Cotranslationally removes the N-terminal methionine from nascent proteins. The N-terminal methionine is often cleaved when the second residue in the primary sequence is small and uncharged (Met-Ala-, Cys, Gly, Pro, Ser, Thr, or Val). The sequence is that of Methionine aminopeptidase 2 from Encephalitozoon intestinalis (strain ATCC 50506) (Microsporidian parasite).